Reading from the N-terminus, the 286-residue chain is Nucleotide-binding protein VC0395_A2112/VC395_2645 (286 aa).

8–15 (GQSGAGKS) lines the ATP pocket. 56–59 (DIRN) contributes to the GTP binding site.

It belongs to the RapZ-like family.

In terms of biological role, displays ATPase and GTPase activities. The protein is Nucleotide-binding protein VC0395_A2112/VC395_2645 of Vibrio cholerae serotype O1 (strain ATCC 39541 / Classical Ogawa 395 / O395).